Here is a 346-residue protein sequence, read N- to C-terminus: UDP-3-O-acylglucosamine N-acyltransferase (346 aa).

The Proton acceptor role is filled by His253.

It belongs to the transferase hexapeptide repeat family. LpxD subfamily. As to quaternary structure, homotrimer.

The catalysed reaction is a UDP-3-O-[(3R)-3-hydroxyacyl]-alpha-D-glucosamine + a (3R)-hydroxyacyl-[ACP] = a UDP-2-N,3-O-bis[(3R)-3-hydroxyacyl]-alpha-D-glucosamine + holo-[ACP] + H(+). Its pathway is bacterial outer membrane biogenesis; LPS lipid A biosynthesis. Catalyzes the N-acylation of UDP-3-O-acylglucosamine using 3-hydroxyacyl-ACP as the acyl donor. Is involved in the biosynthesis of lipid A, a phosphorylated glycolipid that anchors the lipopolysaccharide to the outer membrane of the cell. This Rickettsia peacockii (strain Rustic) protein is UDP-3-O-acylglucosamine N-acyltransferase.